We begin with the raw amino-acid sequence, 283 residues long: Quinate/shikimate dehydrogenase (NAD(+)) (283 aa).

The shikimate site is built by serine 17, threonine 69, lysine 73, asparagine 94, and aspartate 110. L-quinate contacts are provided by residues 17-19 (SRT), threonine 69, lysine 73, asparagine 94, and aspartate 110. Residue lysine 73 is the Proton acceptor of the active site. Residues 137 to 138 (GV), aspartate 158, arginine 163, 203 to 206 (PMGM), alanine 213, valine 228, and glycine 251 contribute to the NAD(+) site. Glutamine 258 contributes to the shikimate binding site. Residue glutamine 258 coordinates L-quinate.

This sequence belongs to the shikimate dehydrogenase family. As to quaternary structure, homodimer.

It catalyses the reaction L-quinate + NAD(+) = 3-dehydroquinate + NADH + H(+). The catalysed reaction is shikimate + NAD(+) = 3-dehydroshikimate + NADH + H(+). The protein operates within metabolic intermediate biosynthesis; chorismate biosynthesis; chorismate from D-erythrose 4-phosphate and phosphoenolpyruvate: step 4/7. It functions in the pathway aromatic compound metabolism; 3,4-dihydroxybenzoate biosynthesis; 3-dehydroquinate from D-quinate (NAD(+) route). Functionally, involved in the biosynthesis of the chorismate, which leads to the biosynthesis of aromatic amino acids, and plays a key role in the quinate degradation pathway. Catalyzes the NAD(+)-dependent oxidation of both quinate and shikimate to 3-dehydroquinate and 3-dehydroshikimate, respectively. The protein is Quinate/shikimate dehydrogenase (NAD(+)) of Corynebacterium glutamicum (strain R).